A 467-amino-acid polypeptide reads, in one-letter code: Glutamate--tRNA ligase (467 aa).

The 'HIGH' region signature appears at 15–25 (PSPTGYLHVGG). Residues 249-253 (KLSKR) carry the 'KMSKS' region motif. Position 252 (Lys-252) interacts with ATP.

Belongs to the class-I aminoacyl-tRNA synthetase family. Glutamate--tRNA ligase type 1 subfamily. In terms of assembly, monomer.

The protein localises to the cytoplasm. The enzyme catalyses tRNA(Glu) + L-glutamate + ATP = L-glutamyl-tRNA(Glu) + AMP + diphosphate. Its function is as follows. Catalyzes the attachment of glutamate to tRNA(Glu) in a two-step reaction: glutamate is first activated by ATP to form Glu-AMP and then transferred to the acceptor end of tRNA(Glu). In Coprothermobacter proteolyticus (strain ATCC 35245 / DSM 5265 / OCM 4 / BT), this protein is Glutamate--tRNA ligase.